Here is a 260-residue protein sequence, read N- to C-terminus: Ribosomal protein L11 methyltransferase (260 aa).

S-adenosyl-L-methionine contacts are provided by Thr-119, Gly-140, Asp-162, and Asn-203.

It belongs to the methyltransferase superfamily. PrmA family.

It localises to the cytoplasm. It carries out the reaction L-lysyl-[protein] + 3 S-adenosyl-L-methionine = N(6),N(6),N(6)-trimethyl-L-lysyl-[protein] + 3 S-adenosyl-L-homocysteine + 3 H(+). Methylates ribosomal protein L11. The polypeptide is Ribosomal protein L11 methyltransferase (Thermosipho africanus (strain TCF52B)).